A 1038-amino-acid chain; its full sequence is Isoleucine--tRNA ligase (1038 aa).

The 'HIGH' region signature appears at 48 to 58 (PTANGKPHVGH). Positions 590 to 594 (KMSKS) match the 'KMSKS' region motif. Lys-593 serves as a coordination point for ATP.

This sequence belongs to the class-I aminoacyl-tRNA synthetase family. IleS type 2 subfamily. Monomer. It depends on Zn(2+) as a cofactor.

It is found in the cytoplasm. The catalysed reaction is tRNA(Ile) + L-isoleucine + ATP = L-isoleucyl-tRNA(Ile) + AMP + diphosphate. Its function is as follows. Catalyzes the attachment of isoleucine to tRNA(Ile). As IleRS can inadvertently accommodate and process structurally similar amino acids such as valine, to avoid such errors it has two additional distinct tRNA(Ile)-dependent editing activities. One activity is designated as 'pretransfer' editing and involves the hydrolysis of activated Val-AMP. The other activity is designated 'posttransfer' editing and involves deacylation of mischarged Val-tRNA(Ile). This chain is Isoleucine--tRNA ligase, found in Clostridium novyi (strain NT).